The following is a 1610-amino-acid chain: MNTPKEEFQDWPIVRIAAHLPDLIVYGHFSPERPFMDYFDGVLMFVDISGFTAMTEKFSSAMYMDRGAEQLVEILNYHISAIVEKVLIFGGDILKFAGDALLALWRVERKQLKNIITVVIKCSLEIHGLFETQEWEEGLDIRVKIGLAAGHISMLVFGDETHSHFLVIGQAVDDVRLAQNMAQMNDVILSPNCWQLCDRSMIEIESVPDQRAVKVNFLKPPPNFNFDEFFTKCTTFMHYYPSGEHKNLLRLACTLKPDPELEMSLQKYVMESILKQIDNKQLQGYLSELRPVTIVFVNLMFEDQDKAEEIGPAIQDAYMHITSVLKIFQGQINKVFMFDKGCSFLCVFGFPGEKVPDELTHALECAMDIFDFCSQVHKIQTVSIGVASGIVFCGIVGHTVRHEYTVIGQKVNLAARMMMYYPGIVTCDSVTYNGSNLPAYFFKELPKKVMKGVADSGPLYQYWGRTEKVMFGMACLICNRKEDYPLLGRNKEINYFMYTMKKFLISNSSQVLMYEGLPGYGKSQILMKIEYLAQGKNHRIIAISLNKISFHQTFYTIQMFMANVLGLDTCKHYKERQTNLRNKVMTLLDEKFYCLLNDIFHVQFPISREISRMSTLKKQKQLEILFMKILKLIVKEERIIFIIDEAQFVDSTSWRFMEKLIRTLPIFIIMSLCPFVNIPCAAARAVIKNRNTTYIVIGAVQPNDISNKICLDLNVSCISKELDSYLGEGSCGIPFYCEELLKNLEHHEVLVFQQTESEEKTNRTWNNLFKYSIKLTEKLNMVTLHSDKESEEVCHLTSGVRLKNLSPPTSLKEISLIQLDSMRLSHQMLVRCAAIIGLTFTTELLFEILPCWNMKMMIKTLATLVESNIFYCFRNGKELQKALKQNDPSFEVHYRSLSLKPSEGMDHGEEEQLRELENEVIECHRIRFCNPMMQKTAYELWLKDQRKAMHLKCARFLEEDAHRCDHCRGRDFIPYHHFTVNIRLNALDMDAIKKMAMSHGFKTEEKLILSNSEIPETSAFFPENRSPEEIREKILNFFDHVLTKMKTSDEDIIPLESCQCEEILEIVILPLAHHFLALGENDKALYYFLEIASAYLIFCDNYMAYMYLNEGQKLLKTLKKDKSWSQTFESATFYSLKGEVCFNMGQIVLAKKMLRKALKLLNRIFPYNLISLFLHIHVEKNRHFHYVNRQAQESPPPGKKRLAQLYRQTVCLSLLWRIYSYSYLFHCKYYAHLAVMMQMNTALETQNCFQIIKAYLDYSLYHHLAGYKGVWFKYEVMAMEHIFNLPLKGEGIEIVAYVAETLVFNKLIMGHLDLAIELGSRALQMWALLQNPNRHYQSLCRLSRCLLLNSRYPQLIQVLGRLWELSVTQEHIFSKAFFYFVCLDILLYSGFVYRTFEECLEFIHQYENNRILKFHSGLLLGLYSSVAIWYARLQEWDNFYKFSNRAKNLLPRRTMTLTYYDGISRYMEGQVLHLQKQIKEQSENAQASGEELLKNLENLVAQNTTGPVFCPRLYHLMAYVCILMGDGQKCGLFLNTALRLSETQGNILEKCWLNMNKESWYSTSELKEDQWLQTILSLPSWEKIVAGRVNIQDLQKNKFLMRANTVDNHF.

2 consecutive Guanylate cyclase domains span residues valine 42–glutamine 179 and threonine 293–methionine 418. The Mg(2+) site is built by aspartate 47 and isoleucine 48. Aspartate 47–threonine 52 is a binding site for ATP. A hydrogencarbonate-binding site is contributed by lysine 95. Position 99 (aspartate 99) interacts with Mg(2+). 2 residues coordinate ATP: aspartate 99 and lysine 144. Residues valine 167, arginine 176, and methionine 337 each coordinate hydrogencarbonate. ATP is bound by residues valine 406 and asparagine 412 to arginine 416.

This sequence belongs to the adenylyl cyclase class-4/guanylyl cyclase family. Mg(2+) serves as cofactor. The cofactor is Mn(2+). Post-translationally, cleavage may occur to generate the active 48 kDa form. Detected in airway epithelial cells and testis (at protein level). Weakly expressed in multiple tissues. Expressed in brain, heart, kidney, liver, lung, pancreas, peripheral blood leukocytes, placenta, skeletal muscle, stomach, thymus, airway epithelial cells, duodenum, jejunum and ileum. Very low level of expression in bone.

The protein resides in the cell membrane. It localises to the cytoplasm. It is found in the cytoskeleton. Its subcellular location is the perinuclear region. The protein localises to the nucleus. The protein resides in the cell projection. It localises to the cilium. It is found in the mitochondrion. It carries out the reaction ATP = 3',5'-cyclic AMP + diphosphate. With respect to regulation, activated by manganese or magnesium ions. In the presence of magnesium ions, the enzyme is activated by bicarbonate. In the presence of manganese ions, the enzyme is inhibited by bicarbonate. In the absence of magnesium and bicarbonate, the enzyme is weakly activated by calcium. Calcium mildly increases the enzyme activity, also in the presence of magnesium ions. Functionally, catalyzes the formation of the signaling molecule cAMP. May function as sensor that mediates responses to changes in cellular bicarbonate and CO(2) levels. Has a critical role in mammalian spermatogenesis by producing the cAMP which regulates cAMP-responsive nuclear factors indispensable for sperm maturation in the epididymis. Induces capacitation, the maturational process that sperm undergo prior to fertilization. Involved in ciliary beat regulation. The protein is Adenylate cyclase type 10 (ADCY10) of Homo sapiens (Human).